We begin with the raw amino-acid sequence, 261 residues long: 4-hydroxy-tetrahydrodipicolinate reductase (261 aa).

Residues 13 to 18 (GMAGRM), 91 to 93 (GTS), and 115 to 118 (APNF) each bind NAD(+). His-149 (proton donor/acceptor) is an active-site residue. His-150 serves as a coordination point for (S)-2,3,4,5-tetrahydrodipicolinate. The active-site Proton donor is the Lys-153. 159–160 (GT) lines the (S)-2,3,4,5-tetrahydrodipicolinate pocket.

This sequence belongs to the DapB family.

The protein localises to the cytoplasm. It carries out the reaction (S)-2,3,4,5-tetrahydrodipicolinate + NAD(+) + H2O = (2S,4S)-4-hydroxy-2,3,4,5-tetrahydrodipicolinate + NADH + H(+). It catalyses the reaction (S)-2,3,4,5-tetrahydrodipicolinate + NADP(+) + H2O = (2S,4S)-4-hydroxy-2,3,4,5-tetrahydrodipicolinate + NADPH + H(+). It participates in amino-acid biosynthesis; L-lysine biosynthesis via DAP pathway; (S)-tetrahydrodipicolinate from L-aspartate: step 4/4. Functionally, catalyzes the conversion of 4-hydroxy-tetrahydrodipicolinate (HTPA) to tetrahydrodipicolinate. In Granulibacter bethesdensis (strain ATCC BAA-1260 / CGDNIH1), this protein is 4-hydroxy-tetrahydrodipicolinate reductase.